The primary structure comprises 496 residues: Cobyric acid synthase (496 aa).

The GATase cobBQ-type domain maps to 255-445 (DLEIAVLKLP…LHGLLDNGPW (191 aa)). The active-site Nucleophile is Cys-336. His-437 is an active-site residue.

Belongs to the CobB/CobQ family. CobQ subfamily.

It participates in cofactor biosynthesis; adenosylcobalamin biosynthesis. Functionally, catalyzes amidations at positions B, D, E, and G on adenosylcobyrinic A,C-diamide. NH(2) groups are provided by glutamine, and one molecule of ATP is hydrogenolyzed for each amidation. The sequence is that of Cobyric acid synthase from Parasynechococcus marenigrum (strain WH8102).